The following is a 498-amino-acid chain: ATP synthase subunit beta, chloroplastic (498 aa).

Residue 172-179 (GGAGVGKT) participates in ATP binding.

This sequence belongs to the ATPase alpha/beta chains family. As to quaternary structure, F-type ATPases have 2 components, CF(1) - the catalytic core - and CF(0) - the membrane proton channel. CF(1) has five subunits: alpha(3), beta(3), gamma(1), delta(1), epsilon(1). CF(0) has four main subunits: a(1), b(1), b'(1) and c(9-12).

The protein resides in the plastid. It is found in the chloroplast thylakoid membrane. The enzyme catalyses ATP + H2O + 4 H(+)(in) = ADP + phosphate + 5 H(+)(out). In terms of biological role, produces ATP from ADP in the presence of a proton gradient across the membrane. The catalytic sites are hosted primarily by the beta subunits. This is ATP synthase subunit beta, chloroplastic from Jasminum nudiflorum (Winter jasmine).